The following is a 94-amino-acid chain: PqqA binding protein (94 aa).

It belongs to the PqqD family. As to quaternary structure, monomer. Interacts with PqqE.

Its pathway is cofactor biosynthesis; pyrroloquinoline quinone biosynthesis. Its function is as follows. Functions as a PqqA binding protein and presents PqqA to PqqE, in the pyrroloquinoline quinone (PQQ) biosynthetic pathway. The protein is PqqA binding protein of Pseudomonas savastanoi pv. phaseolicola (strain 1448A / Race 6) (Pseudomonas syringae pv. phaseolicola (strain 1448A / Race 6)).